The following is a 523-amino-acid chain: Pituitary adenylate cyclase-activating polypeptide type I receptor (523 aa).

An N-terminal signal peptide occupies residues 1–19 (MARVLQLSLTALLLPVAIA). The Extracellular segment spans residues 20 to 151 (MHSDCIFKKE…SGDQDYYYLS (132 aa)). 3 disulfides stabilise this stretch: Cys33–Cys62, Cys53–Cys117, and Cys76–Cys133. Asn47, Asn59, and Asn116 each carry an N-linked (GlcNAc...) asparagine glycan. Residues 124-138 (EPFPHYFDACGFDDY) form an important for ADCYAP1/PACAP ligand binding and specificity region. Residues 124-138 (EPFPHYFDACGFDDY) are important for ligand binding and specificity. The chain crosses the membrane as a helical span at residues 152–176 (VKALYTVGYSTSLATLTTAMVILCR). At 177 to 186 (FRKLHCTRNF) the chain is on the cytoplasmic side. A helical transmembrane segment spans residues 187-207 (IHMNLFVSFMLRAISVFIKDW). Topologically, residues 208–222 (ILYAEQDSSHCFVST) are extracellular. A helical transmembrane segment spans residues 223–248 (VECKAVMVFFHYCVVSNYFWLFIEGL). Cys225 and Cys295 are disulfide-bonded. The Cytoplasmic portion of the chain corresponds to 249 to 266 (YLFTLLVETFFPERRYFY). The chain crosses the membrane as a helical span at residues 267–289 (WYTIIGWGTPTVCVTVWAVLRLY). Over 290–301 (FDDAGCWDMNDS) the chain is Extracellular. A helical transmembrane segment spans residues 302 to 328 (TALWWVIKGPVVGSIMVNFVLFIGIII). Topologically, residues 329 to 346 (ILVQKLQSPDMGGNESSI) are cytoplasmic. A helical membrane pass occupies residues 347-429 (YLTNLRLRVP…HYTVFAFSPE (83 aa)). Residues 430 to 434 (NVSKR) lie on the Extracellular side of the membrane. Residues 435–458 (ERLVFELGLGSFQGFVVAVLYCFL) traverse the membrane as a helical segment. Residues 459–523 (NGEVQAEIKR…SSLPADNLAT (65 aa)) lie on the Cytoplasmic side of the membrane. Phosphoserine is present on residues Ser489 and Ser502.

It belongs to the G-protein coupled receptor 2 family. In terms of assembly, interacts with maxadilan, a vasodilator peptide from Lutzomyia longipalpis saliva; the interaction results in ADCYAP1R1 activation. Hypothalamus, anterior pituitary, adrenal medulla, testicular germ cells.

The protein localises to the cell membrane. Functionally, g protein-coupled receptor activated by the neuropeptide pituitary adenylate cyclase-activating polypeptide (ADCYAP1/PACAP). Binds both PACAP27 and PACAP38 bioactive peptides. Ligand binding causes a conformation change that triggers signaling via guanine nucleotide-binding proteins (G proteins) and modulates the activity of downstream effectors. Activates cAMP-dependent pathway. May regulate the release of adrenocorticotropin, luteinizing hormone, growth hormone, prolactin, epinephrine, and catecholamine. May play a role in spermatogenesis and sperm motility. Causes smooth muscle relaxation and secretion in the gastrointestinal tract. This is Pituitary adenylate cyclase-activating polypeptide type I receptor from Rattus norvegicus (Rat).